Reading from the N-terminus, the 31-residue chain is Photosystem II reaction center protein T (31 aa).

The helical transmembrane segment at 3–23 (ALVYTFLLVGTLGIIFFSIFF) threads the bilayer.

Belongs to the PsbT family. In terms of assembly, PSII is composed of 1 copy each of membrane proteins PsbA, PsbB, PsbC, PsbD, PsbE, PsbF, PsbH, PsbI, PsbJ, PsbK, PsbL, PsbM, PsbT, PsbY, PsbZ, Psb30/Ycf12, at least 3 peripheral proteins of the oxygen-evolving complex and a large number of cofactors. It forms dimeric complexes.

The protein resides in the plastid. Its subcellular location is the chloroplast thylakoid membrane. Its function is as follows. Found at the monomer-monomer interface of the photosystem II (PS II) dimer, plays a role in assembly and dimerization of PSII. PSII is a light-driven water plastoquinone oxidoreductase, using light energy to abstract electrons from H(2)O, generating a proton gradient subsequently used for ATP formation. This is Photosystem II reaction center protein T from Bigelowiella natans (Pedinomonas minutissima).